A 335-amino-acid polypeptide reads, in one-letter code: Vitamin B12 import system permease protein BtuC (335 aa).

Transmembrane regions (helical) follow at residues 21–43, 63–82, 95–114, 119–141, 153–175, 195–212, 244–266, 281–303, and 310–329; these read FLAI…GENW, FPRV…AGAV, GLLG…VLMF, PFWL…LLTF, LLVG…YFST, WRHQ…IWLS, FAVG…IGLV, TLLP…LSRL, and VPIG…WLLL.

The protein belongs to the binding-protein-dependent transport system permease family. FecCD subfamily. The complex is composed of two ATP-binding proteins (BtuD), two transmembrane proteins (BtuC) and a solute-binding protein (BtuF).

Its subcellular location is the cell inner membrane. In terms of biological role, part of the ABC transporter complex BtuCDF involved in vitamin B12 import. Involved in the translocation of the substrate across the membrane. The chain is Vitamin B12 import system permease protein BtuC from Photorhabdus laumondii subsp. laumondii (strain DSM 15139 / CIP 105565 / TT01) (Photorhabdus luminescens subsp. laumondii).